A 35-amino-acid polypeptide reads, in one-letter code: Small toxic polypeptide LdrB (35 aa).

Residues 10–30 (FWHDLAAPILAGIITAAIVGW) traverse the membrane as a helical segment.

This sequence belongs to the Ldr toxic peptide family.

The protein resides in the cell inner membrane. Functionally, toxic component of a type I toxin-antitoxin (TA) system. Overexpression causes rapid cell killing, probably by disrupting the cell inner membrane and disruption of ATP synthesis. In Escherichia coli (strain K12), this protein is Small toxic polypeptide LdrB (ldrB).